Here is a 100-residue protein sequence, read N- to C-terminus: Small ribosomal subunit protein uS14c (100 aa).

It belongs to the universal ribosomal protein uS14 family. In terms of assembly, part of the 30S ribosomal subunit.

It is found in the plastid. The protein localises to the chloroplast. Its function is as follows. Binds 16S rRNA, required for the assembly of 30S particles. The chain is Small ribosomal subunit protein uS14c from Platanus occidentalis (Sycamore).